Here is a 175-residue protein sequence, read N- to C-terminus: Small ribosomal subunit protein uS4 (175 aa).

Residues 105-169 enclose the S4 RNA-binding domain; sequence RRLQTIVYRQ…SPLADSLHPA (65 aa).

This sequence belongs to the universal ribosomal protein uS4 family. In terms of assembly, part of the 30S ribosomal subunit. Contacts protein S5. The interaction surface between S4 and S5 is involved in control of translational fidelity.

One of the primary rRNA binding proteins, it binds directly to 16S rRNA where it nucleates assembly of the body of the 30S subunit. Its function is as follows. With S5 and S12 plays an important role in translational accuracy. This Haloquadratum walsbyi (strain DSM 16790 / HBSQ001) protein is Small ribosomal subunit protein uS4.